A 151-amino-acid chain; its full sequence is Arginine repressor (151 aa).

The protein belongs to the ArgR family.

The protein localises to the cytoplasm. The protein operates within amino-acid biosynthesis; L-arginine biosynthesis [regulation]. In terms of biological role, regulates arginine biosynthesis genes. In Enterococcus faecalis (strain ATCC 700802 / V583), this protein is Arginine repressor.